Consider the following 122-residue polypeptide: Large ribosomal subunit protein uL18 (122 aa).

Belongs to the universal ribosomal protein uL18 family. As to quaternary structure, part of the 50S ribosomal subunit; part of the 5S rRNA/L5/L18/L25 subcomplex. Contacts the 5S and 23S rRNAs.

In terms of biological role, this is one of the proteins that bind and probably mediate the attachment of the 5S RNA into the large ribosomal subunit, where it forms part of the central protuberance. The polypeptide is Large ribosomal subunit protein uL18 (Lachnoclostridium phytofermentans (strain ATCC 700394 / DSM 18823 / ISDg) (Clostridium phytofermentans)).